Reading from the N-terminus, the 338-residue chain is Endonuclease V (338 aa).

Residues Asp52 and Asp126 each contribute to the Mg(2+) site. The disordered stretch occupies residues 253-338 (QLGVAPAQRK…PSPAWVQSPP (86 aa)). 2 stretches are compositionally biased toward basic and acidic residues: residues 260–270 (QRKDRSQKEQR) and 287–323 (RPPE…HQED). Over residues 328–338 (PPSPAWVQSPP) the composition is skewed to pro residues.

Belongs to the endonuclease V family. Monomer. Interacts with PABPC1; the interaction is RNA-dependent and stimulates ENDOV activity. Mg(2+) is required as a cofactor. In terms of tissue distribution, highest levels detected in liver with high levels also found in heart, kidney and testis. Expressed at low levels in brain.

The protein localises to the cytoplasm. Its subcellular location is the nucleus. It is found in the nucleolus. The protein resides in the stress granule. Functionally, endoribonuclease that specifically cleaves inosine-containing RNAs: cleaves RNA at the second phosphodiester bond 3' to inosine. Active against both single-stranded and double-stranded RNAs. Has strong preference for single-stranded RNAs (ssRNAs) toward double-stranded RNAs (dsRNAs). Cleaves mRNAs and tRNAs containing inosine. Also able to cleave structure-specific dsRNA substrates containing the specific sites 5'-IIUI-3' and 5'-UIUU-3'. Inosine is present in a number of RNAs following editing; the function of inosine-specific endoribonuclease is still unclear: it could either play a regulatory role in edited RNAs, or be involved in antiviral response by removing the hyperedited long viral dsRNA genome that has undergone A-to-I editing. Binds branched DNA structures. The sequence is that of Endonuclease V (Endov) from Mus musculus (Mouse).